A 311-amino-acid chain; its full sequence is Tricarboxylate transport protein, mitochondrial (311 aa).

The propeptide at 1–13 (MAAPRGPRALSAA) is removed in mature form. Residues 1 to 21 (MAAPRGPRALSAAAPGSGKPK) form a disordered region. 3 Solcar repeats span residues 23-111 (THPG…LSNH), 122-208 (RRGL…LRNW), and 218-303 (MNPL…VVKL). 3 helical membrane-spanning segments follow: residues 29 to 46 (ILAG…TFPT), 86 to 105 (GLSS…FGMF), and 129 to 143 (LGAG…VCPM). A Phosphoserine modification is found at Ser156. Helical transmembrane passes span 183–202 (GLTA…FFVM), 224–241 (GVFG…NTPL), and 278–297 (GTVP…FIIY).

Belongs to the mitochondrial carrier (TC 2.A.29) family. In terms of processing, possesses a short cleavable presequence, which, however, is found to be dispensable both for targeting to mitochondria and insertion into the inner membrane. However, the presequence is required to keep SLC25A1 in a soluble state and thus in an import-competent state. Mature SLC25A1 lacking the presequence is prone to aggregation. In terms of tissue distribution, expressed minimally but ubiquitously throughout the adult brain. Detected at higher levels in the olfactory bulb, neocortex and cerebellum. Also expressed in a subset of large cells in the globus pallidus.

The protein resides in the mitochondrion inner membrane. It is found in the mitochondrion membrane. It catalyses the reaction (S)-malate(in) + citrate(out) = (S)-malate(out) + citrate(in). The enzyme catalyses D-threo-isocitrate(in) + citrate(out) = D-threo-isocitrate(out) + citrate(in). The catalysed reaction is citrate(out) + succinate(in) = citrate(in) + succinate(out). It carries out the reaction cis-aconitate(in) + citrate(out) = cis-aconitate(out) + citrate(in). It catalyses the reaction trans-aconitate(in) + citrate(out) = trans-aconitate(out) + citrate(in). The enzyme catalyses phosphoenolpyruvate(in) + citrate(out) = phosphoenolpyruvate(out) + citrate(in). The catalysed reaction is maleate(in) + citrate(out) = maleate(out) + citrate(in). In terms of biological role, mitochondrial electroneutral antiporter that exports citrate from the mitochondria into the cytosol in exchange for malate. Also able to mediate the exchange of citrate for isocitrate, phosphoenolpyruvate, cis-aconitate and to a lesser extent trans-aconitate, maleate and succinate. In the cytoplasm, citrate plays important roles in fatty acid and sterol synthesis, regulation of glycolysis, protein acetylation, and other physiopathological processes. The polypeptide is Tricarboxylate transport protein, mitochondrial (Mus musculus (Mouse)).